We begin with the raw amino-acid sequence, 111 residues long: Nucleoid-associated protein Teth39_2199 (111 aa).

Belongs to the YbaB/EbfC family. As to quaternary structure, homodimer.

Its subcellular location is the cytoplasm. The protein localises to the nucleoid. Binds to DNA and alters its conformation. May be involved in regulation of gene expression, nucleoid organization and DNA protection. This Thermoanaerobacter pseudethanolicus (strain ATCC 33223 / 39E) (Clostridium thermohydrosulfuricum) protein is Nucleoid-associated protein Teth39_2199.